The sequence spans 496 residues: Ribose import ATP-binding protein RbsA (496 aa).

ABC transporter domains lie at 5 to 241 (LQMK…VGRE) and 252 to 496 (SPGE…VGGE). 37-44 (GENGAGKS) contacts ATP.

Belongs to the ABC transporter superfamily. Ribose importer (TC 3.A.1.2.1) family. As to quaternary structure, the complex is composed of an ATP-binding protein (RbsA), two transmembrane proteins (RbsC) and a solute-binding protein (RbsB).

It is found in the cell membrane. The catalysed reaction is D-ribose(out) + ATP + H2O = D-ribose(in) + ADP + phosphate + H(+). In terms of biological role, part of the ABC transporter complex RbsABC involved in ribose import. Responsible for energy coupling to the transport system. The protein is Ribose import ATP-binding protein RbsA of Caldanaerobacter subterraneus subsp. tengcongensis (strain DSM 15242 / JCM 11007 / NBRC 100824 / MB4) (Thermoanaerobacter tengcongensis).